A 448-amino-acid polypeptide reads, in one-letter code: Methylenetetrahydrofolate--tRNA-(uracil-5-)-methyltransferase TrmFO (448 aa).

13–18 is a binding site for FAD; sequence GAGLAG.

It belongs to the MnmG family. TrmFO subfamily. It depends on FAD as a cofactor.

It is found in the cytoplasm. The enzyme catalyses uridine(54) in tRNA + (6R)-5,10-methylene-5,6,7,8-tetrahydrofolate + NADH + H(+) = 5-methyluridine(54) in tRNA + (6S)-5,6,7,8-tetrahydrofolate + NAD(+). The catalysed reaction is uridine(54) in tRNA + (6R)-5,10-methylene-5,6,7,8-tetrahydrofolate + NADPH + H(+) = 5-methyluridine(54) in tRNA + (6S)-5,6,7,8-tetrahydrofolate + NADP(+). Catalyzes the folate-dependent formation of 5-methyl-uridine at position 54 (M-5-U54) in all tRNAs. In Streptococcus pyogenes serotype M2 (strain MGAS10270), this protein is Methylenetetrahydrofolate--tRNA-(uracil-5-)-methyltransferase TrmFO.